Consider the following 101-residue polypeptide: UPF0473 protein MGAS10750_Spy1887 (101 aa).

This sequence belongs to the UPF0473 family.

This Streptococcus pyogenes serotype M4 (strain MGAS10750) protein is UPF0473 protein MGAS10750_Spy1887.